The following is a 177-amino-acid chain: Anti-apoptotic protein NR13 (177 aa).

The BH1 motif lies at 75-94 (LETDGGLNWGRLLALVVFAG). Residues 86 to 106 (LLALVVFAGTLAAALAESACE) form a helical membrane-spanning segment. Positions 126–141 (EWMEEHGGWDGFCRFF) match the BH2 motif. Residues 156-176 (SNAIMAAAGFGIAGLAFLLVV) form a helical membrane-spanning segment.

It belongs to the Bcl-2 family. As to quaternary structure, interacts with BAX. In terms of tissue distribution, mainly expressed in neural and muscular tissues.

It is found in the cell membrane. Functionally, shows anti-apoptotic properties. Counteract the pro-apoptotic activity of BAX. This chain is Anti-apoptotic protein NR13 (NR13), found in Coturnix japonica (Japanese quail).